A 233-amino-acid chain; its full sequence is Forkhead box protein L3 (233 aa).

The fork-head DNA-binding region spans 32 to 130; the sequence is RPAYSYIALI…ENGNYRRRRR (99 aa). A compositionally biased stretch (basic residues) spans 125–134; it reads YRRRRRRRGP. The tract at residues 125–198 is disordered; the sequence is YRRRRRRRGP…PRDLKFSIDY (74 aa). Residues 175–184 are compositionally biased toward pro residues; sequence REPPASPAPP. A compositionally biased stretch (basic and acidic residues) spans 185 to 194; the sequence is GKEHPRDLKF.

It is found in the nucleus. Probable transcriptional regulator. The protein is Forkhead box protein L3 of Homo sapiens (Human).